The sequence spans 202 residues: FMN-dependent NADH:quinone oxidoreductase 2 (202 aa).

Residues Ser9, 15-17, 95-98, and 139-142 each bind FMN; these read SAS, MYNF, and TAGG.

This sequence belongs to the azoreductase type 1 family. In terms of assembly, homodimer. The cofactor is FMN.

It carries out the reaction 2 a quinone + NADH + H(+) = 2 a 1,4-benzosemiquinone + NAD(+). It catalyses the reaction N,N-dimethyl-1,4-phenylenediamine + anthranilate + 2 NAD(+) = 2-(4-dimethylaminophenyl)diazenylbenzoate + 2 NADH + 2 H(+). In terms of biological role, quinone reductase that provides resistance to thiol-specific stress caused by electrophilic quinones. Reduces both benzoquinones and naphthoquinones efficiently. Also exhibits azoreductase activity. Catalyzes the reductive cleavage of the azo bond in aromatic azo compounds to the corresponding amines. Preferred substrates are the large bis-azo dye Ponceau BS, amaranth and tropaeolin O. In Pseudomonas aeruginosa (strain ATCC 15692 / DSM 22644 / CIP 104116 / JCM 14847 / LMG 12228 / 1C / PRS 101 / PAO1), this protein is FMN-dependent NADH:quinone oxidoreductase 2.